Reading from the N-terminus, the 968-residue chain is Phosphoenolpyruvate carboxylase 3 (968 aa).

Serine 11 is subject to Phosphoserine. Catalysis depends on residues histidine 173 and lysine 603. Position 705 is a phosphoserine (serine 705).

Belongs to the PEPCase type 1 family. Homotetramer. Mg(2+) is required as a cofactor. In terms of tissue distribution, expressed in roots and siliques, and to a lower extent in stems, leaves and flowers.

It is found in the cytoplasm. The enzyme catalyses oxaloacetate + phosphate = phosphoenolpyruvate + hydrogencarbonate. By light-reversible phosphorylation. Through the carboxylation of phosphoenolpyruvate (PEP) it forms oxaloacetate, a four-carbon dicarboxylic acid source for the tricarboxylic acid cycle. The protein is Phosphoenolpyruvate carboxylase 3 (PPC3) of Arabidopsis thaliana (Mouse-ear cress).